The following is a 522-amino-acid chain: Cytochrome bd-I ubiquinol oxidase subunit 1 (522 aa).

Met1 is modified (N-formylmethionine). Residues 1 to 22 (MLDIVELSRLQFALTAMYHFLF) are Cytoplasmic-facing. Residue His19 participates in heme b binding. Residues 23 to 42 (VPLTLGMAFLLAIMETVYVL) form a helical membrane-spanning segment. Residues 43–94 (SGKQIYKDMTKFWGKLFGINFALGVATGLTMEFQFGTNWSYYSHYVGDIFGA) lie on the Periplasmic side of the membrane. Residues 95 to 114 (PLAIEGLMAFFLESTFVGLF) form a helical membrane-spanning segment. The Cytoplasmic segment spans residues 115 to 129 (FFGWDRLGKVQHMCV). A helical membrane pass occupies residues 130-149 (TWLVALGSNLSALWILVANG). At 150–187 (WMQNPIASDFNFETMRMEMVSFSELVLNPVAQVKFVHT) the chain is on the periplasmic side. His186 is a heme b binding site. Residues 188-207 (VASGYVTGAMFILGISAWYM) form a helical membrane-spanning segment. Topologically, residues 208–219 (LKGRDFAFAKRS) are cytoplasmic. Residues 220–239 (FAIAASFGMAAVLSVIVLGD) form a helical membrane-spanning segment. Topologically, residues 240–392 (ESGYEMGDVQ…VAPLYFAFRI (153 aa)) are periplasmic. Position 393 (Met393) interacts with heme b. The helical transmembrane segment at 393-412 (MVACGFLLLAIIALSFWSVI) threads the bilayer. Residues 413-470 (RNRIGEKKWLLRAALYGIPLPWIAVEAGWFVAEYGRQPWAIGEVLPTAVANSSLTAGD) are Cytoplasmic-facing. The chain crosses the membrane as a helical span at residues 471–490 (LIFSMVLICGLYTLFLVAEL). The Periplasmic portion of the chain corresponds to 491-522 (FLMFKFARLGPSSLKTGRYHFEQSSTTTQPAR).

It belongs to the cytochrome ubiquinol oxidase subunit 1 family. In terms of assembly, heterodimer of subunits I and II. Heme b is required as a cofactor. The cofactor is heme d cis-diol.

It localises to the cell inner membrane. It catalyses the reaction 2 a ubiquinol + O2(in) + 4 H(+)(in) = 2 a ubiquinone + 2 H2O(in) + 4 H(+)(out). The protein operates within energy metabolism; oxidative phosphorylation. In terms of biological role, a terminal oxidase that produces a proton motive force by the vectorial transfer of protons across the inner membrane. It is the component of the aerobic respiratory chain of E.coli that predominates when cells are grown at low aeration. Generates a proton motive force using protons and electrons from opposite sides of the membrane to generate H(2)O, transferring 1 proton/electron. The polypeptide is Cytochrome bd-I ubiquinol oxidase subunit 1 (cydA) (Escherichia coli O6:H1 (strain CFT073 / ATCC 700928 / UPEC)).